A 226-amino-acid polypeptide reads, in one-letter code: Transcription repressor OFP12 (226 aa).

Low complexity predominate over residues 68-87 (SSTFTASTSTAANSSSSSAS). Residues 68–104 (SSTFTASTSTAANSSSSSASYDDSDNYGFAPDDDSPP) are disordered. Residues 152 to 217 (VKHYVQSPDP…IRAFADILVS (66 aa)) enclose the OVATE domain.

As to quaternary structure, interacts with KNAT1, KNAT2, KNAT3 and KNAT4. Expressed in roots, shoots, stems, flower buds and siliques.

Its subcellular location is the nucleus. Its function is as follows. Transcriptional repressor that regulates multiple aspects of plant growth and development through the regulation of BEL1-LIKE (BLH) and KNOX TALE (KNAT) homeodomain transcription factors. The polypeptide is Transcription repressor OFP12 (OFP12) (Arabidopsis thaliana (Mouse-ear cress)).